A 103-amino-acid polypeptide reads, in one-letter code: Large ribosomal subunit protein bL21 (103 aa).

The protein belongs to the bacterial ribosomal protein bL21 family. As to quaternary structure, part of the 50S ribosomal subunit. Contacts protein L20.

Its function is as follows. This protein binds to 23S rRNA in the presence of protein L20. This Psychrobacter arcticus (strain DSM 17307 / VKM B-2377 / 273-4) protein is Large ribosomal subunit protein bL21.